A 1663-amino-acid chain; its full sequence is Cortactin-binding protein 2 (1663 aa).

5 disordered regions span residues 1 to 23 (MATDGASCEPDLSRAPEDAAGAA), 203 to 222 (KKKTNELEEELSAEKRRSTE), 367 to 440 (GASV…LHPG), 454 to 478 (GNANDPDQNGNTTQSPPSRDVSPTS), and 498 to 614 (RFTS…LPPK). Positions 119–276 (KKMQERMSAQ…EQLKKGSDSK (158 aa)) form a coiled coil. Over residues 386–396 (PSTGSTSDPTS) the composition is skewed to low complexity. Arg498 carries the asymmetric dimethylarginine modification. Residues 583-593 (TVASTPSSLPQ) show a composition bias toward polar residues. ANK repeat units lie at residues 709–739 (GRPTLLQQAAAQGNVTLLSMLLNEEGLDINY), 743–772 (DGHSALYSAAKNGHTDCVRLLLSAEAQVNA), 776–805 (NGFTPLCAAAAQGHFECVELLISYDANINH), 809–838 (GGQTPLYLACKNGNKECIKLLLEAGTNRSV), 842–871 (DGWTPVHAAVDTGNVDSLKLLMYHRIPAHG), and 912–942 (EGWTAAHIAASKGFKNCLEILCRHGGLEPER). Residues 1448-1483 (KKGESGAWRKVNTSPRRKSGRFSLPTWNKPDLSTEG) are disordered. Phosphoserine is present on Ser1524. The interval 1560-1663 (DSSGNNPVLS…KNGHLEKPNK (104 aa)) is disordered. Polar residues-rich tracts occupy residues 1561–1574 (SSGNNPVLSATINN) and 1582–1599 (KEVSPLSSHQTTECSNSK). Residues 1624 to 1638 (SQNTKRSSSSSNTRQ) show a composition bias toward low complexity. Residues 1645–1663 (SKEENWNLHKNGHLEKPNK) show a composition bias toward basic and acidic residues.

As to quaternary structure, interacts with CTTN/cortactin SH3 domain. Interacts with STRN, STRN4/zinedin and MOB4/phocein; this interactions mediate the association with the STRIPAK core complex and may regulate dendritic spine distribution of the STRIPAK complex in hippocampal neurons. Activation of glutamate receptors weakens the interaction with STRN and STRN4.

It localises to the cytoplasm. The protein resides in the cell cortex. It is found in the cell projection. Its subcellular location is the dendritic spine. Regulates the dendritic spine distribution of CTTN/cortactin in hippocampal neurons, and thus controls dendritic spinogenesis and dendritic spine maintenance. Associates with the striatin-interacting phosphatase and kinase (STRIPAK) core complex to regulate dendritic spine distribution of the STRIPAK complex in hippocampal neurons. The protein is Cortactin-binding protein 2 (CTTNBP2) of Gorilla gorilla gorilla (Western lowland gorilla).